A 345-amino-acid polypeptide reads, in one-letter code: Dihydroorotase (345 aa).

Positions 14 and 16 each coordinate Zn(2+). Substrate contacts are provided by residues 16–18 and Asn-42; that span reads HLR. The Zn(2+) site is built by Lys-100, His-137, and His-175. An N6-carboxylysine modification is found at Lys-100. Residue His-137 coordinates substrate. Leu-220 provides a ligand contact to substrate. Asp-248 is a Zn(2+) binding site. The active site involves Asp-248. Substrate contacts are provided by His-252 and Ala-264.

This sequence belongs to the metallo-dependent hydrolases superfamily. DHOase family. Class II DHOase subfamily. In terms of assembly, homodimer. Requires Zn(2+) as cofactor.

It catalyses the reaction (S)-dihydroorotate + H2O = N-carbamoyl-L-aspartate + H(+). The protein operates within pyrimidine metabolism; UMP biosynthesis via de novo pathway; (S)-dihydroorotate from bicarbonate: step 3/3. In terms of biological role, catalyzes the reversible cyclization of carbamoyl aspartate to dihydroorotate. The polypeptide is Dihydroorotase (Nitrosococcus oceani (strain ATCC 19707 / BCRC 17464 / JCM 30415 / NCIMB 11848 / C-107)).